The chain runs to 92 residues: Large ribosomal subunit protein bL27 (92 aa).

The segment at 1–21 (MSKKKGVGSSRNGRDSESKRL) is disordered. Positions 12–21 (NGRDSESKRL) are enriched in basic and acidic residues.

It belongs to the bacterial ribosomal protein bL27 family.

The sequence is that of Large ribosomal subunit protein bL27 from Halothermothrix orenii (strain H 168 / OCM 544 / DSM 9562).